The following is a 147-amino-acid chain: Histone-lysine N-methyltransferase, H3 lysine-37 specific (147 aa).

An SET domain is found at 8-116 (SPLEIRDTER…TNEELCISYG (109 aa)).

Belongs to the class V-like SAM-binding methyltransferase superfamily. In terms of assembly, homodimer.

It localises to the cytoplasm. The protein localises to the nucleus. The catalysed reaction is L-lysyl(37)-[histone H3] + S-adenosyl-L-methionine = N(6)-methyl-L-lysyl(37)-[histone H3] + S-adenosyl-L-homocysteine + H(+). It carries out the reaction N(6)-methyl-L-lysyl(37)-[histone H3] + S-adenosyl-L-methionine = N(6),N(6)-dimethyl-L-lysyl(37)-[histone H3] + S-adenosyl-L-homocysteine + H(+). It catalyses the reaction N(6),N(6)-dimethyl-L-lysyl(37)-[histone H3] + S-adenosyl-L-methionine = N(6),N(6),N(6)-trimethyl-L-lysyl(37)-[histone H3] + S-adenosyl-L-homocysteine + H(+). Histone lysine methyltransferase that specifically mono-, di-, and trimethylates 'Lys-37' of histone H3 to regulate sporulation. This chain is Histone-lysine N-methyltransferase, H3 lysine-37 specific, found in Schizosaccharomyces pombe (strain 972 / ATCC 24843) (Fission yeast).